The sequence spans 222 residues: Kinetochore protein Spc25 (222 aa).

The stretch at 51–86 forms a coiled coil; the sequence is RHQRKVGKLQKVLMERREELDKRVSFIEELDRELEA.

This sequence belongs to the SPC25 family. As to quaternary structure, component of the Ndc80 complex, which is composed of Ndc80, Nuf2 and Spc25.

Its subcellular location is the nucleus. The protein localises to the chromosome. It localises to the centromere. The protein resides in the kinetochore. Acts as a component of the essential kinetochore-associated Ndc80 complex, which is required for chromosome segregation and spindle checkpoint activity during meiosis and mitosis. Required for kinetochore integrity and the organization of stable microtubule binding sites in the outer plate of the kinetochore. Participates in SAC signaling that responds specifically to disruptions in spindle microtubule dynamics. The NDC80 complex synergistically enhances the affinity of the SKA1 complex for microtubules and may allow the NDC80 complex to track depolymerizing microtubules. The polypeptide is Kinetochore protein Spc25 (Drosophila melanogaster (Fruit fly)).